The following is a 152-amino-acid chain: Transcriptional regulator MraZ (152 aa).

SpoVT-AbrB domains are found at residues 5–52 and 81–124; these read ASAV…PLNQ and ATEC…SESE.

It belongs to the MraZ family. Forms oligomers.

It localises to the cytoplasm. It is found in the nucleoid. The polypeptide is Transcriptional regulator MraZ (Histophilus somni (strain 129Pt) (Haemophilus somnus)).